The following is a 437-amino-acid chain: Nuclear hormone receptor family member nhr-100 (437 aa).

Residues 21–96 constitute a DNA-binding region (nuclear receptor); sequence DTSCLVCGDP…VGMDANAVRS (76 aa). NR C4-type zinc fingers lie at residues 24–44 and 60–79; these read CLVC…CNGC and CSFN…CRAC. The NR LBD domain maps to 141–409; sequence QTKEIIAHML…SGGGLPYDIH (269 aa).

It belongs to the nuclear hormone receptor family.

It is found in the nucleus. In terms of biological role, orphan nuclear receptor. This Caenorhabditis elegans protein is Nuclear hormone receptor family member nhr-100 (nhr-100).